A 110-amino-acid chain; its full sequence is UPF0060 membrane protein Noc_2955 (110 aa).

4 consecutive transmembrane segments (helical) span residues 7–27 (VGLF…AYLW), 33–53 (TIWL…LLSL), 63–83 (AAYG…VNGI), and 87–107 (TWDL…MFAP).

Belongs to the UPF0060 family.

It localises to the cell inner membrane. In Nitrosococcus oceani (strain ATCC 19707 / BCRC 17464 / JCM 30415 / NCIMB 11848 / C-107), this protein is UPF0060 membrane protein Noc_2955.